An 895-amino-acid polypeptide reads, in one-letter code: Serine-rich coiled-coil domain-containing protein 1 (895 aa).

Disordered regions lie at residues 1 to 142 (MGDS…KEPS), 154 to 177 (SGRS…KQST), 332 to 394 (ELHS…RTLG), and 459 to 497 (RSSS…SSKM). A compositionally biased stretch (low complexity) spans 43 to 56 (SSSPSSTNSSSGST). A compositionally biased stretch (polar residues) spans 83 to 102 (TEQNLSISNGAQPSHSNMQK). The segment covering 131 to 142 (LTEDFEREKEPS) has biased composition (basic and acidic residues). Polar residues predominate over residues 348–358 (SLQSTELSVGN). Positions 675 to 705 (MLRLQLKDRDELISQLQAELEKVQHLQKAFA) form a coiled coil. A disordered region spans residues 731–753 (QGGRETTHRNRTMSQSHSTRDRK).

This sequence belongs to the CCSER family.

The chain is Serine-rich coiled-coil domain-containing protein 1 (Ccser1) from Mus musculus (Mouse).